The chain runs to 126 residues: Protein ApaG (126 aa).

One can recognise an ApaG domain in the interval 2 to 126 (DVSQPRIQIQ…FRLAVPNILN (125 aa)).

In Vibrio vulnificus (strain CMCP6), this protein is Protein ApaG.